A 201-amino-acid chain; its full sequence is CDP-diacylglycerol--serine O-phosphatidyltransferase (201 aa).

The next 6 membrane-spanning stretches (helical) occupy residues 19–39 (IITG…LSII), 57–77 (FGAE…PAYL), 88–108 (LISA…FGIL), 112–132 (GFIG…CQLI), 133–153 (NSYL…ISDI), and 162–182 (IFIY…PHFA).

It belongs to the CDP-alcohol phosphatidyltransferase class-I family.

Its subcellular location is the cell membrane. It catalyses the reaction a CDP-1,2-diacyl-sn-glycerol + L-serine = a 1,2-diacyl-sn-glycero-3-phospho-L-serine + CMP + H(+). In Methanocaldococcus jannaschii (strain ATCC 43067 / DSM 2661 / JAL-1 / JCM 10045 / NBRC 100440) (Methanococcus jannaschii), this protein is CDP-diacylglycerol--serine O-phosphatidyltransferase (pssA).